The primary structure comprises 607 residues: CRS2-associated factor 2, chloroplastic (607 aa).

The segment at 1–75 (MSPPPPQRPS…GNGGNPAFRA (75 aa)) is disordered. A chloroplast-targeting transit peptide spans 1 to 79 (MSPPPPQRPS…NPAFRAPHLR (79 aa)). CRM domains follow at residues 228-324 (EPLT…TRPR) and 346-442 (EGLT…YPKP). Positions 482-505 (KMFELWTNAIESSVALMLDDAEVD) are CRS2 binding. Residues 550-576 (TEDEPETGTLEPQQHEFTESSDVAEDD) form a disordered region.

As to quaternary structure, interacts with CRS2 and RNA. Part of large ribonucleo-protein complexes that include group IIB introns, CRS2 and CAF2.

Its subcellular location is the plastid. The protein resides in the chloroplast stroma. Its function is as follows. Required for the splicing of group IIB introns in chloroplasts. Forms splicing particles with CRS2. Interacts with RNA and confers intron specificity of the splicing particles. The sequence is that of CRS2-associated factor 2, chloroplastic from Oryza sativa subsp. japonica (Rice).